A 138-amino-acid polypeptide reads, in one-letter code: Large ribosomal subunit protein uL16 (138 aa).

Basic residues predominate over residues 1–13; sequence MLQPARRKYRKEQ. Residues 1–22 form a disordered region; sequence MLQPARRKYRKEQKGRNTGVAT.

The protein belongs to the universal ribosomal protein uL16 family. As to quaternary structure, part of the 50S ribosomal subunit.

In terms of biological role, binds 23S rRNA and is also seen to make contacts with the A and possibly P site tRNAs. In Polaromonas naphthalenivorans (strain CJ2), this protein is Large ribosomal subunit protein uL16.